A 173-amino-acid polypeptide reads, in one-letter code: Ribosome maturation factor RimM (173 aa).

The 74-residue stretch at Glu-93 to Met-166 folds into the PRC barrel domain.

Belongs to the RimM family. In terms of assembly, binds ribosomal protein uS19.

It localises to the cytoplasm. Functionally, an accessory protein needed during the final step in the assembly of 30S ribosomal subunit, possibly for assembly of the head region. Essential for efficient processing of 16S rRNA. May be needed both before and after RbfA during the maturation of 16S rRNA. It has affinity for free ribosomal 30S subunits but not for 70S ribosomes. This is Ribosome maturation factor RimM from Fusobacterium nucleatum subsp. nucleatum (strain ATCC 25586 / DSM 15643 / BCRC 10681 / CIP 101130 / JCM 8532 / KCTC 2640 / LMG 13131 / VPI 4355).